Consider the following 372-residue polypeptide: Envelope phospholipase OPG057 (372 aa).

The YPPL motif lies at 153-156; it reads YPPL. S-palmitoyl cysteine; by host attachment occurs at residues C185 and C186. The PLD phosphodiesterase domain occupies 307–334; that stretch reads FTIQNNTKLLIVDDEYVHITSANFDGTH.

This sequence belongs to the orthopoxvirus OPG057 family. As to quaternary structure, interacts with protein OPG190. In terms of processing, palmitoylated. Attachment of the palmitate moiety is essential for correct intracellular targeting and protein function.

The protein localises to the virion membrane. Its subcellular location is the host Golgi apparatus. It localises to the host trans-Golgi network. The protein resides in the host endoplasmic reticulum membrane. The enzyme catalyses a 1,2-diacyl-sn-glycero-3-phosphocholine + H2O = a 1,2-diacyl-sn-glycero-3-phosphate + choline + H(+). Its function is as follows. Major envelope protein that plays a role in the biogenesis of the viral double membrane and in egress of virus from the host cell. Produces the wrapped form of virus that is required for cell-to-cell spread. Acts as a lipase with broad specificity including phospholipase C, phospholipase A, and triacylglycerol lipase activities. This is Envelope phospholipase OPG057 (OPG057) from Cynomys gunnisoni (Gunnison's prairie dog).